Here is a 572-residue protein sequence, read N- to C-terminus: Light-independent protochlorophyllide reductase subunit N (572 aa).

[4Fe-4S] cluster-binding residues include Cys106, Cys131, and Cys191. The disordered stretch occupies residues 249–268 (SLDSMKLPSGGREKQINDVN).

Belongs to the BchN/ChlN family. As to quaternary structure, protochlorophyllide reductase is composed of three subunits; ChlL, ChlN and ChlB. Forms a heterotetramer of two ChlB and two ChlN subunits. [4Fe-4S] cluster is required as a cofactor.

It localises to the plastid. It is found in the chloroplast. The enzyme catalyses chlorophyllide a + oxidized 2[4Fe-4S]-[ferredoxin] + 2 ADP + 2 phosphate = protochlorophyllide a + reduced 2[4Fe-4S]-[ferredoxin] + 2 ATP + 2 H2O. It participates in porphyrin-containing compound metabolism; chlorophyll biosynthesis (light-independent). Component of the dark-operative protochlorophyllide reductase (DPOR) that uses Mg-ATP and reduced ferredoxin to reduce ring D of protochlorophyllide (Pchlide) to form chlorophyllide a (Chlide). This reaction is light-independent. The NB-protein (ChlN-ChlB) is the catalytic component of the complex. The chain is Light-independent protochlorophyllide reductase subunit N from Oltmannsiellopsis viridis (Marine flagellate).